Consider the following 1028-residue polypeptide: Isoleucine--tRNA ligase (1028 aa).

Positions 51-61 (PTANGRPHIGH) match the 'HIGH' region motif. Positions 591-595 (KMSKS) match the 'KMSKS' region motif. Residue Lys594 coordinates ATP.

The protein belongs to the class-I aminoacyl-tRNA synthetase family. IleS type 2 subfamily. Monomer. Requires Zn(2+) as cofactor.

Its subcellular location is the cytoplasm. It catalyses the reaction tRNA(Ile) + L-isoleucine + ATP = L-isoleucyl-tRNA(Ile) + AMP + diphosphate. Its function is as follows. Catalyzes the attachment of isoleucine to tRNA(Ile). As IleRS can inadvertently accommodate and process structurally similar amino acids such as valine, to avoid such errors it has two additional distinct tRNA(Ile)-dependent editing activities. One activity is designated as 'pretransfer' editing and involves the hydrolysis of activated Val-AMP. The other activity is designated 'posttransfer' editing and involves deacylation of mischarged Val-tRNA(Ile). This chain is Isoleucine--tRNA ligase, found in Thermoplasma volcanium (strain ATCC 51530 / DSM 4299 / JCM 9571 / NBRC 15438 / GSS1).